A 267-amino-acid chain; its full sequence is GTP cyclohydrolase FolE2 (267 aa).

It belongs to the GTP cyclohydrolase IV family.

The catalysed reaction is GTP + H2O = 7,8-dihydroneopterin 3'-triphosphate + formate + H(+). Its pathway is cofactor biosynthesis; 7,8-dihydroneopterin triphosphate biosynthesis; 7,8-dihydroneopterin triphosphate from GTP: step 1/1. Its function is as follows. Converts GTP to 7,8-dihydroneopterin triphosphate. The protein is GTP cyclohydrolase FolE2 of Geobacter sp. (strain M21).